A 162-amino-acid chain; its full sequence is MRLTSKGRYAVTAMLDVALNSESGPVPLADISERQGISLSYLEQLFSRLRKNGLVASVRGPGGGYLLGKDAGQIAVGEVISAVDESVDATRCQGKGGCQGGDKCLTHALWRDLSDRLTGFLNNITLGELVNNQEVLDVSDRQHNEAHRPTRAQDAIDVKLRA.

The 130-residue stretch at 2–131 (RLTSKGRYAV…NNITLGELVN (130 aa)) folds into the HTH rrf2-type domain. The segment at residues 28–51 (LADISERQGISLSYLEQLFSRLRK) is a DNA-binding region (H-T-H motif). Residues cysteine 92, cysteine 98, and cysteine 104 each coordinate [2Fe-2S] cluster. The tract at residues 141–162 (RQHNEAHRPTRAQDAIDVKLRA) is disordered.

[2Fe-2S] cluster is required as a cofactor.

Its function is as follows. Regulates the transcription of several operons and genes involved in the biogenesis of Fe-S clusters and Fe-S-containing proteins. This is HTH-type transcriptional regulator IscR from Cronobacter sakazakii (strain ATCC BAA-894) (Enterobacter sakazakii).